The chain runs to 93 residues: MTMKIRAIVTVKGLVQGVAFRHHTVLQGNQLRVTGWVKNLPNGDVQGCFEGDETDVQALVEWCHHGPSRARVDRVIVERKSFRGEFDTFDVRY.

The Acylphosphatase-like domain occupies 6-93; that stretch reads RAIVTVKGLV…GEFDTFDVRY (88 aa). Catalysis depends on residues arginine 21 and asparagine 39.

This sequence belongs to the acylphosphatase family.

The catalysed reaction is an acyl phosphate + H2O = a carboxylate + phosphate + H(+). This chain is Acylphosphatase (acyP), found in Geobacter metallireducens (strain ATCC 53774 / DSM 7210 / GS-15).